Here is a 189-residue protein sequence, read N- to C-terminus: ATP-dependent protease subunit HslV (189 aa).

Thr-12 is an active-site residue. Residues Ser-172, Cys-175, and Thr-178 each coordinate Na(+).

Belongs to the peptidase T1B family. HslV subfamily. As to quaternary structure, a double ring-shaped homohexamer of HslV is capped on each side by a ring-shaped HslU homohexamer. The assembly of the HslU/HslV complex is dependent on binding of ATP.

The protein localises to the cytoplasm. The enzyme catalyses ATP-dependent cleavage of peptide bonds with broad specificity.. With respect to regulation, allosterically activated by HslU binding. Its function is as follows. Protease subunit of a proteasome-like degradation complex believed to be a general protein degrading machinery. The sequence is that of ATP-dependent protease subunit HslV from Ehrlichia chaffeensis (strain ATCC CRL-10679 / Arkansas).